The chain runs to 463 residues: MTRKYFGTDGIRGRVGEAPITPEFVIHLGYSAGKVLTSSDWHLSKGERPAVLIGKDTRISGYMLESALQAGLSAAGVDVLLSGPMPTPAVAYLTRALRLQAGIVISASHNPFEDNGIKFFSALGAKLPDATEQEIEAGLNAPLKAMPSAQLGKARRVNDARGRYIEFCKSTFPNHLDLRGLRVVVDCAHGATYQIAGPVLHELGAEVVAIGIHPDGLNINHECGATHGAALQEAVRHHRADIGVALDGDGDRVIMTDGEGMLYDGDQLIYLVAKHRKQNGLLKGGVAGTLMTNLAIENGLKKLDIPFARANVGDRYVLELLQIKNWQLGGEGSGHIICLDKHTTGDGIISALQVLYAMRDSGKTLTELASDVTLYPQQLINVRVPKGFDAHNSLAIKTAQAEAERDLDTTGRVLLRASGTEPLIRVMVEGESGQKVKHWAEKIAEVVRNAAAGERSVEKALPN.

Ser-108 (phosphoserine intermediate) is an active-site residue. Mg(2+) is bound by residues Ser-108, Asp-247, Asp-249, and Asp-251. Position 108 is a phosphoserine (Ser-108).

It belongs to the phosphohexose mutase family. It depends on Mg(2+) as a cofactor. In terms of processing, activated by phosphorylation.

The catalysed reaction is alpha-D-glucosamine 1-phosphate = D-glucosamine 6-phosphate. In terms of biological role, catalyzes the conversion of glucosamine-6-phosphate to glucosamine-1-phosphate. This is Phosphoglucosamine mutase from Nitrosospira multiformis (strain ATCC 25196 / NCIMB 11849 / C 71).